Here is a 60-residue protein sequence, read N- to C-terminus: Mannitol-specific phosphotransferase enzyme IIA component (60 aa).

The 59-residue stretch at 2 to 60 (SELFSNDNIFLNVNVNSQNEAIEKAGKALVDSGAVTDAYIQVVSTFMGNGLAIPHGTDD) folds into the PTS EIIA type-2 domain. H56 serves as the catalytic Tele-phosphohistidine intermediate. H56 bears the Phosphohistidine; by HPr mark.

Homodimer or homotrimer. Seems to be a monomer when not phosphorylated.

The protein resides in the cytoplasm. Functionally, the phosphoenolpyruvate-dependent sugar phosphotransferase system (sugar PTS), a major carbohydrate active transport system, catalyzes the phosphorylation of incoming sugar substrates concomitantly with their translocation across the cell membrane. The enzyme II CmtAB PTS system is involved in D-mannitol transport. The protein is Mannitol-specific phosphotransferase enzyme IIA component of Staphylococcus aureus.